A 336-amino-acid polypeptide reads, in one-letter code: Glyceraldehyde-3-phosphate dehydrogenase (336 aa).

Residues 12 to 13, Asp34, Arg78, and Thr121 contribute to the NAD(+) site; that span reads RI. D-glyceraldehyde 3-phosphate contacts are provided by residues 151–153, Thr182, Arg199, 212–213, and Arg235; these read SCT and TG. The active-site Nucleophile is the Cys152. Asn316 is an NAD(+) binding site.

Belongs to the glyceraldehyde-3-phosphate dehydrogenase family. In terms of assembly, homotetramer.

The protein localises to the cytoplasm. It catalyses the reaction D-glyceraldehyde 3-phosphate + phosphate + NAD(+) = (2R)-3-phospho-glyceroyl phosphate + NADH + H(+). It participates in carbohydrate degradation; glycolysis; pyruvate from D-glyceraldehyde 3-phosphate: step 1/5. Catalyzes the oxidative phosphorylation of glyceraldehyde 3-phosphate (G3P) to 1,3-bisphosphoglycerate (BPG) using the cofactor NAD. The first reaction step involves the formation of a hemiacetal intermediate between G3P and a cysteine residue, and this hemiacetal intermediate is then oxidized to a thioester, with concomitant reduction of NAD to NADH. The reduced NADH is then exchanged with the second NAD, and the thioester is attacked by a nucleophilic inorganic phosphate to produce BPG. The chain is Glyceraldehyde-3-phosphate dehydrogenase (gap) from Streptococcus pyogenes serotype M3 (strain ATCC BAA-595 / MGAS315).